Here is a 328-residue protein sequence, read N- to C-terminus: D-cysteine desulfhydrase (328 aa).

N6-(pyridoxal phosphate)lysine is present on Lys-51.

This sequence belongs to the ACC deaminase/D-cysteine desulfhydrase family. As to quaternary structure, homodimer. It depends on pyridoxal 5'-phosphate as a cofactor.

The catalysed reaction is D-cysteine + H2O = hydrogen sulfide + pyruvate + NH4(+) + H(+). In terms of biological role, catalyzes the alpha,beta-elimination reaction of D-cysteine and of several D-cysteine derivatives. It could be a defense mechanism against D-cysteine. The polypeptide is D-cysteine desulfhydrase (Salmonella agona (strain SL483)).